Consider the following 398-residue polypeptide: MRVPEIPEETASPLRAGDPPAQVAGHPLIRRSARVPRWRARLADHDAASLAELLRRAGGTASAARAVSGKVVRHAFGAEPGAPAPAWDARALAALGVGAWAHEALLALDPAPSLEIAERAPAQDDTLRLVLRAGDGALIESVLIPGPARTTLCVSSQVGCARACSFCETGRLGLERQLAAGEIVDQVRIARALAAERGGAPLRNLVFMGMGEPFDNLGEVLKAIRLLTDPRAFRFAPSHVTVSTVGVADKIEPFFRDARAELAVSLNAPDDARRQAIMPVNARFSMAALKEAIARALPPGRRVLFEYVLFDRFNDAPEDADLLAAYVAGLRCRVNVIPCNPGPDPALRPPSAARLDAFVARLSGHGVTTLVRRPRGRDVGGACGQLAGMARLRQPEPA.

The tract at residues 1 to 24 is disordered; that stretch reads MRVPEIPEETASPLRAGDPPAQVA. Glutamate 140 acts as the Proton acceptor in catalysis. Positions 146–378 constitute a Radical SAM core domain; sequence GPARTTLCVS…TLVRRPRGRD (233 aa). A disulfide bridge connects residues cysteine 153 and cysteine 383. Residues cysteine 160, cysteine 164, and cysteine 167 each contribute to the [4Fe-4S] cluster site. S-adenosyl-L-methionine-binding positions include 211 to 212, serine 243, 265 to 267, and asparagine 340; these read GE and SLN. The active-site S-methylcysteine intermediate is cysteine 383.

Belongs to the radical SAM superfamily. RlmN family. [4Fe-4S] cluster serves as cofactor.

The protein localises to the cytoplasm. This chain is Probable RNA methyltransferase sce1580, found in Sorangium cellulosum (strain So ce56) (Polyangium cellulosum (strain So ce56)).